The sequence spans 377 residues: uncharacterized protein (377 aa).

The next 2 membrane-spanning stretches (helical) occupy residues 23–43 (LKFI…FIAY) and 251–271 (GSFI…SISY).

It is found in the cell membrane. This is an uncharacterized protein from Methanocaldococcus jannaschii (strain ATCC 43067 / DSM 2661 / JAL-1 / JCM 10045 / NBRC 100440) (Methanococcus jannaschii).